The following is a 375-amino-acid chain: Erythronate-4-phosphate dehydrogenase (375 aa).

Substrate-binding residues include S45 and T66. Positions 146 and 175 each coordinate NAD(+). The active site involves R208. Position 232 (D232) interacts with NAD(+). E237 is a catalytic residue. Residue H254 is the Proton donor of the active site. Residue G257 coordinates NAD(+). Residue Y258 participates in substrate binding.

This sequence belongs to the D-isomer specific 2-hydroxyacid dehydrogenase family. PdxB subfamily. Homodimer.

It localises to the cytoplasm. The catalysed reaction is 4-phospho-D-erythronate + NAD(+) = (R)-3-hydroxy-2-oxo-4-phosphooxybutanoate + NADH + H(+). It functions in the pathway cofactor biosynthesis; pyridoxine 5'-phosphate biosynthesis; pyridoxine 5'-phosphate from D-erythrose 4-phosphate: step 2/5. Catalyzes the oxidation of erythronate-4-phosphate to 3-hydroxy-2-oxo-4-phosphonooxybutanoate. This chain is Erythronate-4-phosphate dehydrogenase, found in Edwardsiella ictaluri (strain 93-146).